A 145-amino-acid polypeptide reads, in one-letter code: Putative nickel-responsive regulator (145 aa).

Ni(2+) is bound by residues H77, H88, H90, and C96.

This sequence belongs to the transcriptional regulatory CopG/NikR family. Ni(2+) serves as cofactor.

Functionally, transcriptional regulator. This chain is Putative nickel-responsive regulator, found in Rhizobium rhizogenes (strain K84 / ATCC BAA-868) (Agrobacterium radiobacter).